A 273-amino-acid chain; its full sequence is 2,3,4,5-tetrahydropyridine-2,6-dicarboxylate N-succinyltransferase (273 aa).

2 residues coordinate substrate: Arg105 and Asp142.

Belongs to the transferase hexapeptide repeat family. As to quaternary structure, homotrimer.

The protein resides in the cytoplasm. It catalyses the reaction (S)-2,3,4,5-tetrahydrodipicolinate + succinyl-CoA + H2O = (S)-2-succinylamino-6-oxoheptanedioate + CoA. It participates in amino-acid biosynthesis; L-lysine biosynthesis via DAP pathway; LL-2,6-diaminopimelate from (S)-tetrahydrodipicolinate (succinylase route): step 1/3. In Bordetella avium (strain 197N), this protein is 2,3,4,5-tetrahydropyridine-2,6-dicarboxylate N-succinyltransferase.